We begin with the raw amino-acid sequence, 319 residues long: Translocon-associated protein subunit alpha (319 aa).

An N-terminal signal peptide occupies residues 1-21 (MRLLPRLLLLFLLAFPAAVLL). Topologically, residues 22–208 (RGGPGGSLAV…EREDGLDGET (187 aa)) are lumenal. Positions 35 to 76 (LTEDEETVEDPIIEDEDDEAEVEEDEPTDLAEEKEEEEDVSS) are enriched in acidic residues. Positions 35–84 (LTEDEETVEDPIIEDEDDEAEVEEDEPTDLAEEKEEEEDVSSEPEASPSA) are disordered. Asparagine 137 and asparagine 192 each carry an N-linked (GlcNAc...) asparagine glycan. Residues 209–229 (IFMYMFLAGLGLLVVVGLHQL) traverse the membrane as a helical segment. The Cytoplasmic portion of the chain corresponds to 230–319 (LESRKRKRPI…SLRQLAVCGI (90 aa)). Serine 248 bears the Phosphoserine mark. Threonine 261 is modified (phosphothreonine).

It belongs to the TRAP-alpha family. As to quaternary structure, heterotetramer of TRAP-alpha, TRAP-beta, TRAP-delta and TRAP-gamma. Interacts with palmitoylated calnexin (CALX), the interaction is required for efficient folding of glycosylated proteins.

It is found in the endoplasmic reticulum membrane. Functionally, TRAP proteins are part of a complex whose function is to bind calcium to the ER membrane and thereby regulate the retention of ER resident proteins. May be involved in the recycling of the translocation apparatus after completion of the translocation process or may function as a membrane-bound chaperone facilitating folding of translocated proteins. The polypeptide is Translocon-associated protein subunit alpha (Ssr1) (Rattus norvegicus (Rat)).